The following is a 175-amino-acid chain: CDP-archaeol synthase (175 aa).

The next 4 membrane-spanning stretches (helical) occupy residues 41–61 (GFFVGLIFGALAGLMQMQLLE), 82–102 (TILIFALAVGSLFGDMFMSFF), 122–142 (FVLGALIFAYLASPVWFAEQF), and 147–167 (IAVILIITPLLHLATNVVGYF).

This sequence belongs to the CDP-archaeol synthase family. Requires Mg(2+) as cofactor.

The protein resides in the cell membrane. The enzyme catalyses 2,3-bis-O-(geranylgeranyl)-sn-glycerol 1-phosphate + CTP + H(+) = CDP-2,3-bis-O-(geranylgeranyl)-sn-glycerol + diphosphate. The protein operates within membrane lipid metabolism; glycerophospholipid metabolism. Catalyzes the formation of CDP-2,3-bis-(O-geranylgeranyl)-sn-glycerol (CDP-archaeol) from 2,3-bis-(O-geranylgeranyl)-sn-glycerol 1-phosphate (DGGGP) and CTP. This reaction is the third ether-bond-formation step in the biosynthesis of archaeal membrane lipids. This Methanococcoides burtonii (strain DSM 6242 / NBRC 107633 / OCM 468 / ACE-M) protein is CDP-archaeol synthase.